The following is a 158-amino-acid chain: MATVVGFDFGLKRFGAAVGQSVSMTASPLKEIPAQDGIPRWEAIEALLEEWKPALVIVGEPLNMDGSVSEMALRARKFARRLHGRYNLRVEMADERLTSSEAKSMVRERYGQRDFGRFAVDSIAAVFIVESWLEAHADNLDAFLHPPRKQGKSNDIID.

It belongs to the YqgF nuclease family.

It is found in the cytoplasm. Functionally, could be a nuclease involved in processing of the 5'-end of pre-16S rRNA. The protein is Putative pre-16S rRNA nuclease of Hahella chejuensis (strain KCTC 2396).